Here is a 180-residue protein sequence, read N- to C-terminus: Large ribosomal subunit protein uL6 (180 aa).

The protein belongs to the universal ribosomal protein uL6 family. Part of the 50S ribosomal subunit.

This protein binds to the 23S rRNA, and is important in its secondary structure. It is located near the subunit interface in the base of the L7/L12 stalk, and near the tRNA binding site of the peptidyltransferase center. The sequence is that of Large ribosomal subunit protein uL6 from Protochlamydia amoebophila (strain UWE25).